The chain runs to 116 residues: Large ribosomal subunit protein bL20c (116 aa).

This sequence belongs to the bacterial ribosomal protein bL20 family.

It is found in the plastid. The protein localises to the chloroplast. Binds directly to 23S ribosomal RNA and is necessary for the in vitro assembly process of the 50S ribosomal subunit. It is not involved in the protein synthesizing functions of that subunit. In Ipomoea purpurea (Common morning glory), this protein is Large ribosomal subunit protein bL20c.